Reading from the N-terminus, the 255-residue chain is Putative cysteine-rich repeat secretory protein 32 (255 aa).

Positions 1–28 are cleaved as a signal peptide; the sequence is MYSSYSLFKCLVCFYILGIQVLIHSVSS. Gnk2-homologous domains lie at 35–136 and 143–252; these read YLHH…TINS and YENT…LYPF.

It belongs to the cysteine-rich repeat secretory protein family.

Its subcellular location is the secreted. The protein is Putative cysteine-rich repeat secretory protein 32 (CRRSP32) of Arabidopsis thaliana (Mouse-ear cress).